A 608-amino-acid chain; its full sequence is Protein UL27 (608 aa).

A compositionally biased stretch (pro residues) spans 1 to 13 (MNPVDQPPPPLPT). The tract at residues 1–33 (MNPVDQPPPPLPTQQPEEQAKEDHDDGDERLFR) is disordered. The span at 18 to 33 (EQAKEDHDDGDERLFR) shows a compositional bias: basic and acidic residues.

Belongs to the herpesviridae U4 family. As to quaternary structure, interacts with host KAT5, PSME3 and EP400.

The protein localises to the host nucleus. The protein resides in the host nucleolus. Promotes a cell cycle arrest in G0/G1 by inducing the proteasomal degradation of host histone acetyltransferase KAT5/Tip60. The chain is Protein UL27 (UL27) from Human cytomegalovirus (strain AD169) (HHV-5).